Consider the following 1567-residue polypeptide: Myosin-2A (1567 aa).

The region spanning 4–57 (EVGTRCWYPSKEQGWIGAEVTKNDLKDGTYFMELTLEDNEVVNVETKDLTNEKD) is the Myosin N-terminal SH3-like domain. The 717-residue stretch at 70–786 (ESTEDLTTLS…MLAYFEKLRS (717 aa)) folds into the Myosin motor domain. An ATP-binding site is contributed by 164–171 (GESGAGKT). Residues 446-526 (FIGVLDIYGF…LGILSLLDEE (81 aa)) form an actin-binding region. A disordered region spans residues 619–640 (EEAKKNAASQDQKQLKKPTPIR). IQ domains lie at 789 to 818 (MNSA…SLSL), 812 to 836 (MKAS…EYEL), 837 to 859 (EQHA…YISG), 860 to 884 (VISS…QSKY), 885 to 907 (ESNA…AYES), and 908 to 937 (KRRD…DAKS). The stretch at 947-1091 (KLENKVIQLT…LAHLQTSIAL (145 aa)) forms a coiled coil. The interval 1092 to 1567 (GTVTTNTNIV…VAQQVTVPDA (476 aa)) is non alpha-helical, tail domain. The Dilute domain occupies 1230 to 1505 (AQVLTTIQKV…LKYVADIVKK (276 aa)).

This sequence belongs to the TRAFAC class myosin-kinesin ATPase superfamily. Myosin family. In terms of assembly, homodimer. Interacts with calmodulin (CMD1) and the myosin light chain MLC1 through its IQ repeats.

Myosin heavy chain that is required for the cell cycle-regulated transport of various organelles and proteins for their segregation. Functions by binding with its tail domain to receptor proteins on organelles and exerting force with its N-terminal motor domain against actin filaments, thereby transporting its cargo along polarized actin cables. In Naumovozyma castellii (Yeast), this protein is Myosin-2A (MYO2A).